The sequence spans 57 residues: MSKTIVRKNESIDDALRRFKRAVSKTGTLQEVRKREFYEKPSVRRKKKSEAARKRKH.

The protein belongs to the bacterial ribosomal protein bS21 family.

This chain is Small ribosomal subunit protein bS21, found in Geobacillus kaustophilus (strain HTA426).